Reading from the N-terminus, the 325-residue chain is ATPase GET3 (325 aa).

An ATP-binding site is contributed by 34-41 (KGGVGKTT). Aspartate 63 is a catalytic residue. Residues glutamate 243 and asparagine 270 each contribute to the ATP site. Residues cysteine 281 and cysteine 284 each coordinate Zn(2+).

The protein belongs to the arsA ATPase family. Homodimer.

The protein resides in the cytoplasm. The protein localises to the endoplasmic reticulum. ATPase required for the post-translational delivery of tail-anchored (TA) proteins to the endoplasmic reticulum. Recognizes and selectively binds the transmembrane domain of TA proteins in the cytosol. This complex then targets to the endoplasmic reticulum by membrane-bound receptors, where the tail-anchored protein is released for insertion. This process is regulated by ATP binding and hydrolysis. ATP binding drives the homodimer towards the closed dimer state, facilitating recognition of newly synthesized TA membrane proteins. ATP hydrolysis is required for insertion. Subsequently, the homodimer reverts towards the open dimer state, lowering its affinity for the membrane-bound receptor, and returning it to the cytosol to initiate a new round of targeting. This is ATPase GET3 from Coccidioides posadasii (strain C735) (Valley fever fungus).